Reading from the N-terminus, the 443-residue chain is Probable glycine dehydrogenase (decarboxylating) subunit 1 (443 aa).

This sequence belongs to the GcvP family. N-terminal subunit subfamily. The glycine cleavage system is composed of four proteins: P, T, L and H. In this organism, the P 'protein' is a heterodimer of two subunits.

The enzyme catalyses N(6)-[(R)-lipoyl]-L-lysyl-[glycine-cleavage complex H protein] + glycine + H(+) = N(6)-[(R)-S(8)-aminomethyldihydrolipoyl]-L-lysyl-[glycine-cleavage complex H protein] + CO2. Its function is as follows. The glycine cleavage system catalyzes the degradation of glycine. The P protein binds the alpha-amino group of glycine through its pyridoxal phosphate cofactor; CO(2) is released and the remaining methylamine moiety is then transferred to the lipoamide cofactor of the H protein. The chain is Probable glycine dehydrogenase (decarboxylating) subunit 1 from Koribacter versatilis (strain Ellin345).